Consider the following 396-residue polypeptide: Elongation factor Tu (396 aa).

Residues 10-206 (KPHVNVGTIG…ALDTYIPEPE (197 aa)) form the tr-type G domain. Residues 19 to 26 (GHVDHGKT) form a G1 region. 19-26 (GHVDHGKT) lines the GTP pocket. Residue Thr26 coordinates Mg(2+). Positions 60 to 64 (GITIN) are G2. Positions 81-84 (DCPG) are G3. Residues 81-85 (DCPGH) and 136-139 (NKCD) each bind GTP. Residues 136–139 (NKCD) are G4. Residues 174–176 (SAL) form a G5 region.

It belongs to the TRAFAC class translation factor GTPase superfamily. Classic translation factor GTPase family. EF-Tu/EF-1A subfamily. As to quaternary structure, monomer.

It localises to the cytoplasm. It carries out the reaction GTP + H2O = GDP + phosphate + H(+). In terms of biological role, GTP hydrolase that promotes the GTP-dependent binding of aminoacyl-tRNA to the A-site of ribosomes during protein biosynthesis. This is Elongation factor Tu from Acinetobacter baylyi (strain ATCC 33305 / BD413 / ADP1).